The chain runs to 116 residues: Ferredoxin-thioredoxin reductase, catalytic chain (116 aa).

Residue cysteine 57 participates in [4Fe-4S] cluster binding. The Nucleophile role is filled by cysteine 59. The cysteines at positions 59 and 89 are disulfide-linked. [4Fe-4S] cluster-binding residues include cysteine 76, cysteine 78, and cysteine 87.

This sequence belongs to the ferredoxin thioredoxin reductase beta subunit family. In terms of assembly, heterodimer of subunit A (variable subunit) and subunit B (catalytic subunit). Heterodimeric FTR forms a complex with ferredoxin and thioredoxin. Requires [4Fe-4S] cluster as cofactor.

The protein localises to the plastid. Its subcellular location is the chloroplast. The enzyme catalyses [thioredoxin]-disulfide + 2 reduced [2Fe-2S]-[ferredoxin] + 2 H(+) = [thioredoxin]-dithiol + 2 oxidized [2Fe-2S]-[ferredoxin]. Functionally, catalytic subunit of the ferredoxin-thioredoxin reductase (FTR), which catalyzes the two-electron reduction of thioredoxins by the electrons provided by reduced ferredoxin. The protein is Ferredoxin-thioredoxin reductase, catalytic chain (ftrB) of Pyropia yezoensis (Susabi-nori).